The chain runs to 379 residues: Protein RecA (379 aa).

79 to 86 (GPESSGKT) serves as a coordination point for ATP.

It belongs to the RecA family.

Its subcellular location is the cytoplasm. In terms of biological role, can catalyze the hydrolysis of ATP in the presence of single-stranded DNA, the ATP-dependent uptake of single-stranded DNA by duplex DNA, and the ATP-dependent hybridization of homologous single-stranded DNAs. It interacts with LexA causing its activation and leading to its autocatalytic cleavage. In Streptococcus thermophilus, this protein is Protein RecA.